The primary structure comprises 437 residues: Probable glycine dehydrogenase (decarboxylating) subunit 1 (437 aa).

Belongs to the GcvP family. N-terminal subunit subfamily. In terms of assembly, the glycine cleavage system is composed of four proteins: P, T, L and H. In this organism, the P 'protein' is a heterodimer of two subunits.

It carries out the reaction N(6)-[(R)-lipoyl]-L-lysyl-[glycine-cleavage complex H protein] + glycine + H(+) = N(6)-[(R)-S(8)-aminomethyldihydrolipoyl]-L-lysyl-[glycine-cleavage complex H protein] + CO2. The glycine cleavage system catalyzes the degradation of glycine. The P protein binds the alpha-amino group of glycine through its pyridoxal phosphate cofactor; CO(2) is released and the remaining methylamine moiety is then transferred to the lipoamide cofactor of the H protein. The polypeptide is Probable glycine dehydrogenase (decarboxylating) subunit 1 (Thermotoga maritima (strain ATCC 43589 / DSM 3109 / JCM 10099 / NBRC 100826 / MSB8)).